The chain runs to 1857 residues: U3 small nucleolar RNA-associated protein 10 (1857 aa).

A helical transmembrane segment spans residues 267–287 (LTAYSIISVLSSLVPLSADLV). Residues 1817–1855 (LIPYIAELLEDDDEEVELEVRNGLVRVIENVLGEPLDRY) form an HEAT repeat.

The protein belongs to the HEATR1/UTP10 family. As to quaternary structure, component of the ribosomal small subunit (SSU) processome.

Its subcellular location is the nucleus. It localises to the nucleolus. The protein localises to the membrane. Involved in nucleolar processing of pre-18S ribosomal RNA. Involved in ribosome biosynthesis. The sequence is that of U3 small nucleolar RNA-associated protein 10 from Debaryomyces hansenii (strain ATCC 36239 / CBS 767 / BCRC 21394 / JCM 1990 / NBRC 0083 / IGC 2968) (Yeast).